The primary structure comprises 108 residues: UPF0145 protein alr2488 (108 aa).

It belongs to the UPF0145 family.

In Nostoc sp. (strain PCC 7120 / SAG 25.82 / UTEX 2576), this protein is UPF0145 protein alr2488.